We begin with the raw amino-acid sequence, 315 residues long: Protein-methionine-sulfoxide reductase catalytic subunit MsrP (315 aa).

Positions 1-45 form a signal peptide, tat-type signal; sequence MPSYRPPKIASSEITPRQVYLRRREFLGAATLGAMALYGAGKASA. Mo-molybdopterin is bound by residues Asn-71, 74–75, Cys-129, Thr-164, Asn-214, Arg-219, and 230–232; these read YE and GIK.

The protein belongs to the MsrP family. Heterodimer of a catalytic subunit (MsrP) and a heme-binding subunit (MsrQ). It depends on Mo-molybdopterin as a cofactor. In terms of processing, predicted to be exported by the Tat system. The position of the signal peptide cleavage has not been experimentally proven.

The protein resides in the periplasm. It catalyses the reaction L-methionyl-[protein] + a quinone + H2O = L-methionyl-(S)-S-oxide-[protein] + a quinol. It carries out the reaction L-methionyl-[protein] + a quinone + H2O = L-methionyl-(R)-S-oxide-[protein] + a quinol. Part of the MsrPQ system that repairs oxidized periplasmic proteins containing methionine sulfoxide residues (Met-O), using respiratory chain electrons. Thus protects these proteins from oxidative-stress damage caused by reactive species of oxygen and chlorine generated by the host defense mechanisms. MsrPQ is essential for the maintenance of envelope integrity under bleach stress, rescuing a wide series of structurally unrelated periplasmic proteins from methionine oxidation. The catalytic subunit MsrP is non-stereospecific, being able to reduce both (R-) and (S-) diastereoisomers of methionine sulfoxide. The protein is Protein-methionine-sulfoxide reductase catalytic subunit MsrP of Rhizobium etli (strain ATCC 51251 / DSM 11541 / JCM 21823 / NBRC 15573 / CFN 42).